The chain runs to 118 residues: UPF0058 protein MJ1132 (118 aa).

This sequence belongs to the UPF0058 family.

This chain is UPF0058 protein MJ1132, found in Methanocaldococcus jannaschii (strain ATCC 43067 / DSM 2661 / JAL-1 / JCM 10045 / NBRC 100440) (Methanococcus jannaschii).